Reading from the N-terminus, the 134-residue chain is Fluoride-specific ion channel FluC 2 (134 aa).

The next 4 membrane-spanning stretches (helical) occupy residues 10 to 30, 43 to 63, 67 to 87, and 100 to 120; these read LSAELQELVLVALGAVPGALL, LLVNVLGAALLGLLAGLPAAP, LLVGIGFCGSLTTFSSWMVDA, and FGLIGLTLGLGVGAAALGFWL. The Na(+) site is built by glycine 75 and threonine 78.

It belongs to the fluoride channel Fluc/FEX (TC 1.A.43) family.

The protein resides in the cell inner membrane. The enzyme catalyses fluoride(in) = fluoride(out). Na(+) is not transported, but it plays an essential structural role and its presence is essential for fluoride channel function. In terms of biological role, fluoride-specific ion channel. Important for reducing fluoride concentration in the cell, thus reducing its toxicity. The protein is Fluoride-specific ion channel FluC 2 of Synechococcus sp. (strain CC9902).